We begin with the raw amino-acid sequence, 362 residues long: Cobalt-precorrin-5B C(1)-methyltransferase (362 aa).

Belongs to the CbiD family.

The catalysed reaction is Co-precorrin-5B + S-adenosyl-L-methionine = Co-precorrin-6A + S-adenosyl-L-homocysteine. The protein operates within cofactor biosynthesis; adenosylcobalamin biosynthesis; cob(II)yrinate a,c-diamide from sirohydrochlorin (anaerobic route): step 6/10. Catalyzes the methylation of C-1 in cobalt-precorrin-5B to form cobalt-precorrin-6A. In Geotalea daltonii (strain DSM 22248 / JCM 15807 / FRC-32) (Geobacter daltonii), this protein is Cobalt-precorrin-5B C(1)-methyltransferase.